We begin with the raw amino-acid sequence, 386 residues long: Methylthioribose-1-phosphate isomerase (386 aa).

Catalysis depends on D261, which acts as the Proton donor.

This sequence belongs to the eIF-2B alpha/beta/delta subunits family. MtnA subfamily.

The protein resides in the cytoplasm. It localises to the nucleus. The enzyme catalyses 5-(methylsulfanyl)-alpha-D-ribose 1-phosphate = 5-(methylsulfanyl)-D-ribulose 1-phosphate. Its pathway is amino-acid biosynthesis; L-methionine biosynthesis via salvage pathway; L-methionine from S-methyl-5-thio-alpha-D-ribose 1-phosphate: step 1/6. In terms of biological role, catalyzes the interconversion of methylthioribose-1-phosphate (MTR-1-P) into methylthioribulose-1-phosphate (MTRu-1-P). The polypeptide is Methylthioribose-1-phosphate isomerase (Paracoccidioides brasiliensis (strain Pb03)).